A 2351-amino-acid chain; its full sequence is Coagulation factor VIII (2351 aa).

The N-terminal stretch at 1–19 is a signal peptide; it reads MQIELSTCFFLCLLRFCFS. Plastocyanin-like domains lie at 20-198 and 206-348; these read ATRR…LLVC and EKTQ…VDSC. Positions 20-348 constitute an F5/8 type A 1 domain; sequence ATRRYYLGAV…MEAYVKVDSC (329 aa). An N-linked (GlcNAc...) asparagine glycan is attached at N60. C172 and C198 form a disulfide bridge. The N-linked (GlcNAc...) asparagine glycan is linked to N258. C267 and C348 are disulfide-bonded. Y365 carries the post-translational modification Sulfotyrosine. Plastocyanin-like domains are found at residues 399–573 and 583–730; these read KTWV…LLIC and NQIM…VSSC. The F5/8 type A 2 domain maps to 399–730; sequence KTWVHYIAAE…MTALLKVSSC (332 aa). C547 and C573 are disulfide-bonded. N601 carries N-linked (GlcNAc...) asparagine glycosylation. C649 and C730 are joined by a disulfide. Sulfotyrosine is present on residues Y737, Y738, and Y742. Residues 760 to 1667 are b; it reads SFSQNSRHPS…NPPVLKRHQR (908 aa). N-linked (GlcNAc...) asparagine glycosylation is found at N776, N803, N847, and N919. 2 disordered regions span residues 906–928 and 941–961; these read STIP…PPSM and FGKK…SEEN. N962, N982, N1020, N1024, N1074, N1085, N1204, N1274, N1278, N1301, N1319, N1431, and N1461 each carry an N-linked (GlcNAc...) asparagine glycan. Y1683 and Y1699 each carry sulfotyrosine. 2 Plastocyanin-like domains span residues 1713-1877 and 1887-2040; these read KTRH…LLVC and GRQV…SNKC. Residues 1713-2040 enclose the F5/8 type A 3 domain; that stretch reads KTRHYFIAAV…TLFLVYSNKC (328 aa). N1829 carries an N-linked (GlcNAc...) asparagine glycan. Cystine bridges form between C1851/C1877, C1918/C1922, C2040/C2188, and C2193/C2345. 2 F5/8 type C domains span residues 2040–2188 and 2193–2345; these read CQTP…LMGC and CSMP…VLGC. N-linked (GlcNAc...) asparagine glycosylation is present at N2137.

It belongs to the multicopper oxidase family. As to quaternary structure, interacts with VWF/vWF. vWF binding is essential for the stabilization of F8 in circulation. Sulfation on Tyr-1699 is essential for binding vWF. In terms of processing, proteolytically cleaved by cathepsin CTSG to produce a partially activated form.

The protein resides in the secreted. It is found in the extracellular space. Factor VIII, along with calcium and phospholipid, acts as a cofactor for F9/factor IXa when it converts F10/factor X to the activated form, factor Xa. In Homo sapiens (Human), this protein is Coagulation factor VIII (F8).